The following is a 101-amino-acid chain: Apolipoprotein C-II (101 aa).

Residues 1–22 (MGTRYLLVLLLVLLVLGFEVQG) form the signal peptide. Residues 66–74 (TMDEKIRDI) are lipid binding. The lipoprotein lipase cofactor stretch occupies residues 78–101 (STAAVSTYAGIFTDQLLSMLKGDS).

It belongs to the apolipoprotein C2 family. Post-translationally, proapolipoprotein C-II is synthesized as a sialic acid containing glycoprotein which is subsequently desialylated prior to its proteolytic processing. Proapolipoprotein C-II, the major form found in plasma undergoes proteolytic cleavage of its N-terminal hexapeptide to generate apolipoprotein C-II, which occurs as the minor form in plasma. As to expression, highly expressed in the liver. Moderately expressed in the ileum, jejunum and ovary.

The protein localises to the secreted. Component of chylomicrons, very low-density lipoproteins (VLDL), low-density lipoproteins (LDL), and high-density lipoproteins (HDL) in plasma. Plays an important role in lipoprotein metabolism as an activator of lipoprotein lipase. Both proapolipoprotein C-II and apolipoprotein C-II can activate lipoprotein lipase. The sequence is that of Apolipoprotein C-II (APOC2) from Canis lupus familiaris (Dog).